The sequence spans 921 residues: Phototropin-1A (921 aa).

The span at 1 to 11 shows a compositional bias: gly residues; it reads MASKGTEGGHG. Disordered stretches follow at residues 1-59 and 88-118; these read MASK…SPFL and TGLP…QSAA. The segment covering 40–51 has biased composition (low complexity); that stretch reads SSASSFRTAAAA. Positions 97-117 are enriched in polar residues; sequence RPSSGSARTSSEDNPQQQQSA. The region spanning 123–197 is the PAS 1 domain; the sequence is VSEELRAALS…KIRQSLANGS (75 aa). Residues 172-177, arginine 190, asparagine 205, asparagine 215, and glutamine 236 each bind FMN; that span reads NCRFLQ. The residue at position 173 (cysteine 173) is an S-4a-FMN cysteine. The PAC 1 domain occupies 197–251; the sequence is SNYCGRILNYKKDGTPFWNLLTIAPIKDEDGRLLKFIGMQVEVSKYTEGKKDTVV. A compositionally biased stretch (polar residues) spans 286–295; it reads RSLSESSNNT. Disordered regions lie at residues 286-347 and 364-390; these read RSLS…NRTR and SVEK…ESFE. Basic and acidic residues-rich tracts occupy residues 312-321 and 364-376; these read PSKRSSESGS and SVEK…RDED. One can recognise a PAS 2 domain in the interval 400 to 473; it reads RGIDLATTLE…RKIRDAIDNQ (74 aa). FMN contacts are provided by residues 449-454, arginine 467, asparagine 482, asparagine 492, and glutamine 513; that span reads NCRFLQ. The residue at position 450 (cysteine 450) is an S-4a-FMN cysteine. The 55-residue stretch at 474–528 folds into the PAC 2 domain; the sequence is AEVTVQLINYTKSGKKFWNLFHLQPMRDQKGDVQYFIGVQLDGTEHVQDDAAKEG. A Protein kinase domain is found at 594–881; it reads FRPVKPLGSG…ANEIKGHPFF (288 aa). Residues 600-608 and lysine 623 contribute to the ATP site; that span reads LGSGDTGSV. The Proton acceptor role is filled by aspartate 719.

This sequence belongs to the protein kinase superfamily. Ser/Thr protein kinase family. As to quaternary structure, homodimer. FMN serves as cofactor. In terms of processing, autophosphorylated in response to blue light irradiation. Post-translationally, 2 molecules of FMN bind covalently to cysteines after exposure to blue light and are reversed in the dark. As to expression, highly expressed in coleoptiles of dark-grown seedlings.

The catalysed reaction is L-seryl-[protein] + ATP = O-phospho-L-seryl-[protein] + ADP + H(+). It catalyses the reaction L-threonyl-[protein] + ATP = O-phospho-L-threonyl-[protein] + ADP + H(+). Its function is as follows. Protein kinase that acts as a blue light photoreceptor in a signal-transduction pathway for phototropic responses. Regulates a wide range of physiological activities in plants that maximize the efficiency of photosynthesis, such as chloroplast relocations, stomata opening, and leaf expansion. The protein is Phototropin-1A (PHOT1A) of Oryza sativa subsp. japonica (Rice).